A 63-amino-acid chain; its full sequence is Cecropin-B (63 aa).

A signal peptide spans 1–23; that stretch reads MNFNKIFVFVALILAISLGNSEA. Arginine 62 is modified (arginine amide).

This sequence belongs to the cecropin family. In terms of tissue distribution, strongly expressed in larval, pupal and adult fat body and hemocytes after injection of bacteria. Maximal expression is seen in pupae.

It is found in the secreted. Cecropins have lytic and antibacterial activity against several Gram-positive and Gram-negative bacteria. This is Cecropin-B (CecB) from Drosophila melanogaster (Fruit fly).